The sequence spans 159 residues: Ribosomal RNA large subunit methyltransferase H (159 aa).

S-adenosyl-L-methionine contacts are provided by residues Leu76, Gly107, and 126-131 (LSKLTM).

It belongs to the RNA methyltransferase RlmH family. As to quaternary structure, homodimer.

Its subcellular location is the cytoplasm. It catalyses the reaction pseudouridine(1915) in 23S rRNA + S-adenosyl-L-methionine = N(3)-methylpseudouridine(1915) in 23S rRNA + S-adenosyl-L-homocysteine + H(+). Functionally, specifically methylates the pseudouridine at position 1915 (m3Psi1915) in 23S rRNA. The sequence is that of Ribosomal RNA large subunit methyltransferase H from Acinetobacter baumannii (strain AB307-0294).